Consider the following 520-residue polypeptide: Cysteine--tRNA ligase (520 aa).

Cysteine 29 serves as a coordination point for Zn(2+). Positions 31–41 (PTVYNYPHLGN) match the 'HIGH' region motif. Residues cysteine 227, histidine 252, and glutamate 256 each coordinate Zn(2+). Positions 301 to 305 (KMSKS) match the 'KMSKS' region motif. Lysine 304 lines the ATP pocket.

The protein belongs to the class-I aminoacyl-tRNA synthetase family. Monomer. Zn(2+) is required as a cofactor.

It localises to the cytoplasm. The catalysed reaction is tRNA(Cys) + L-cysteine + ATP = L-cysteinyl-tRNA(Cys) + AMP + diphosphate. The chain is Cysteine--tRNA ligase (cysS) from Treponema pallidum (strain Nichols).